We begin with the raw amino-acid sequence, 209 residues long: Putative cardiolipin synthase (209 aa).

Helical transmembrane passes span 27-47, 82-102, 126-146, and 157-177; these read AFVY…ILVF, VTVP…VLTL, VTYV…TILL, and LLAC…WAFV.

It belongs to the CDP-alcohol phosphatidyltransferase class-I family.

The protein resides in the cell membrane. It catalyses the reaction a CDP-1,2-diacyl-sn-glycerol + a 1,2-diacyl-sn-glycero-3-phospho-(1'-sn-glycerol) = a cardiolipin + CMP + H(+). It functions in the pathway lipid metabolism; phospholipid metabolism. Its function is as follows. May catalyze the biosynthesis of cardiolipin from phosphatidylglycerol (PG) and CDP-diacylglycerol. This Mycobacterium bovis (strain ATCC BAA-935 / AF2122/97) protein is Putative cardiolipin synthase.